We begin with the raw amino-acid sequence, 806 residues long: Leucine--tRNA ligase (806 aa).

A 'HIGH' region motif is present at residues 40–51; sequence PYPSGTGLHVGH. Positions 576–580 match the 'KMSKS' region motif; it reads KMSKS. Lysine 579 is an ATP binding site.

This sequence belongs to the class-I aminoacyl-tRNA synthetase family.

Its subcellular location is the cytoplasm. The catalysed reaction is tRNA(Leu) + L-leucine + ATP = L-leucyl-tRNA(Leu) + AMP + diphosphate. The chain is Leucine--tRNA ligase from Prosthecochloris aestuarii (strain DSM 271 / SK 413).